Reading from the N-terminus, the 466-residue chain is 3-isopropylmalate dehydratase large subunit (466 aa).

Residues Cys347, Cys407, and Cys410 each contribute to the [4Fe-4S] cluster site.

It belongs to the aconitase/IPM isomerase family. LeuC type 1 subfamily. In terms of assembly, heterodimer of LeuC and LeuD. The cofactor is [4Fe-4S] cluster.

It catalyses the reaction (2R,3S)-3-isopropylmalate = (2S)-2-isopropylmalate. It functions in the pathway amino-acid biosynthesis; L-leucine biosynthesis; L-leucine from 3-methyl-2-oxobutanoate: step 2/4. In terms of biological role, catalyzes the isomerization between 2-isopropylmalate and 3-isopropylmalate, via the formation of 2-isopropylmaleate. This is 3-isopropylmalate dehydratase large subunit from Vibrio vulnificus (strain YJ016).